Here is a 688-residue protein sequence, read N- to C-terminus: Potassium-transporting ATPase ATP-binding subunit (688 aa).

Helical transmembrane passes span Val35 to Ala55, Ala62 to Ala82, Ile219 to Leu239, and Val260 to Ile280. Asp313 serves as the catalytic 4-aspartylphosphate intermediate. Residues Asp350, Glu354, Phe383–Ser390, and Lys401 contribute to the ATP site. Mg(2+)-binding residues include Asp524 and Asp528. A run of 3 helical transmembrane segments spans residues Phe594 to Met614, Ala622 to Leu642, and Val668 to Ile688.

Belongs to the cation transport ATPase (P-type) (TC 3.A.3) family. Type IA subfamily. As to quaternary structure, the system is composed of three essential subunits: KdpA, KdpB and KdpC.

The protein localises to the cell inner membrane. It carries out the reaction K(+)(out) + ATP + H2O = K(+)(in) + ADP + phosphate + H(+). Functionally, part of the high-affinity ATP-driven potassium transport (or Kdp) system, which catalyzes the hydrolysis of ATP coupled with the electrogenic transport of potassium into the cytoplasm. This subunit is responsible for energy coupling to the transport system and for the release of the potassium ions to the cytoplasm. The protein is Potassium-transporting ATPase ATP-binding subunit of Tolumonas auensis (strain DSM 9187 / NBRC 110442 / TA 4).